We begin with the raw amino-acid sequence, 271 residues long: Thioredoxin-related transmembrane protein 2 homolog (271 aa).

An N-terminal signal peptide occupies residues 1 to 28; it reads MTWKKQMALLAKPYYWVNILLAISYLLA. Over 29-102 the chain is Extracellular; the sequence is KKTQFICTRL…AILWAYADFR (74 aa). A helical membrane pass occupies residues 103–123; the sequence is YGLGFLLLCVLVGMVLPEPSY. One can recognise a Thioredoxin domain in the interval 112 to 262; it reads VLVGMVLPEP…YKEAIERLPI (151 aa). Over 124–271 the chain is Cytoplasmic; it reads RGPEHITYFR…IAPKEAKKVQ (148 aa). Positions 268 to 271 match the Di-lysine motif motif; it reads KKVQ.

It localises to the membrane. This is Thioredoxin-related transmembrane protein 2 homolog from Drosophila melanogaster (Fruit fly).